The primary structure comprises 359 residues: 5-formaminoimidazole-4-carboxamide-1-(beta)-D-ribofuranosyl 5'-monophosphate synthetase (359 aa).

The 5-amino-1-(5-phospho-beta-D-ribosyl)imidazole-4-carboxamide site is built by H28 and S95. The region spanning 115-346 (ELMIWETDRD…MGRRIAREIK (232 aa)) is the ATP-grasp domain. ATP-binding positions include 144 to 206 (PEEI…ANIY) and E228. N256 is a binding site for 5-amino-1-(5-phospho-beta-D-ribosyl)imidazole-4-carboxamide. Mg(2+)-binding residues include E295 and E308.

It belongs to the phosphohexose mutase family. Requires Mg(2+) as cofactor. It depends on Mn(2+) as a cofactor.

The enzyme catalyses 5-amino-1-(5-phospho-beta-D-ribosyl)imidazole-4-carboxamide + formate + ATP = 5-formamido-1-(5-phospho-D-ribosyl)imidazole-4-carboxamide + ADP + phosphate. It functions in the pathway purine metabolism; IMP biosynthesis via de novo pathway; 5-formamido-1-(5-phospho-D-ribosyl)imidazole-4-carboxamide from 5-amino-1-(5-phospho-D-ribosyl)imidazole-4-carboxamide (formate route): step 1/1. Its function is as follows. Catalyzes the ATP- and formate-dependent formylation of 5-aminoimidazole-4-carboxamide-1-beta-d-ribofuranosyl 5'-monophosphate (AICAR) to 5-formaminoimidazole-4-carboxamide-1-beta-d-ribofuranosyl 5'-monophosphate (FAICAR) in the absence of folates. This chain is 5-formaminoimidazole-4-carboxamide-1-(beta)-D-ribofuranosyl 5'-monophosphate synthetase, found in Archaeoglobus fulgidus (strain ATCC 49558 / DSM 4304 / JCM 9628 / NBRC 100126 / VC-16).